A 430-amino-acid polypeptide reads, in one-letter code: Adenylosuccinate synthetase (430 aa).

GTP-binding positions include 12-18 and 40-42; these read GDEGKGK and GHT. The active-site Proton acceptor is the D13. Residues D13 and G40 each contribute to the Mg(2+) site. IMP-binding positions include 13 to 16, 38 to 41, T130, R144, Q224, T239, and R303; these read DEGK and NAGH. H41 acts as the Proton donor in catalysis. 299-305 serves as a coordination point for substrate; the sequence is VVTGRKR. GTP is bound by residues R305, 331–333, and 413–415; these read KLD and STS.

The protein belongs to the adenylosuccinate synthetase family. Homodimer. The cofactor is Mg(2+).

The protein localises to the cytoplasm. The catalysed reaction is IMP + L-aspartate + GTP = N(6)-(1,2-dicarboxyethyl)-AMP + GDP + phosphate + 2 H(+). It participates in purine metabolism; AMP biosynthesis via de novo pathway; AMP from IMP: step 1/2. Its function is as follows. Plays an important role in the de novo pathway of purine nucleotide biosynthesis. Catalyzes the first committed step in the biosynthesis of AMP from IMP. The polypeptide is Adenylosuccinate synthetase (Methylobacterium nodulans (strain LMG 21967 / CNCM I-2342 / ORS 2060)).